The sequence spans 1984 residues: Vitellogenin receptor Yl (1984 aa).

Residues 1–19 (MCQAEHQVHPSEQRIRVES) are compositionally biased toward basic and acidic residues. A disordered region spans residues 1-48 (MCQAEHQVHPSEQRIRVESPKMTASRRGFNLTSQTRAHPSSGGSTSSR). Asparagine 30 carries N-linked (GlcNAc...) asparagine glycosylation. Residues 30-48 (NLTSQTRAHPSSGGSTSSR) show a composition bias toward polar residues. 5 consecutive LDL-receptor class A domains span residues 89-125 (RCDA…LDCD), 128-167 (LCRP…LNCP), 183-221 (SCSK…AGCK), 226-263 (TCPG…RGCL), and 265-305 (LCEP…DLCH). 20 cysteine pairs are disulfide-bonded: cysteine 90/cysteine 102, cysteine 97/cysteine 115, cysteine 109/cysteine 124, cysteine 129/cysteine 144, cysteine 137/cysteine 157, cysteine 151/cysteine 166, cysteine 184/cysteine 197, cysteine 191/cysteine 210, cysteine 204/cysteine 220, cysteine 227/cysteine 239, cysteine 234/cysteine 253, cysteine 247/cysteine 262, cysteine 266/cysteine 281, cysteine 275/cysteine 294, cysteine 288/cysteine 304, cysteine 310/cysteine 321, cysteine 315/cysteine 331, cysteine 352/cysteine 363, cysteine 359/cysteine 372, and cysteine 374/cysteine 387. Residues 306 to 343 (SKPDCDAKKCALGAKCHMMPASGAECFCPKGFRLAKFE) form the EGF-like 1 domain. Positions 348-388 (DVDECKEQDDLCSQGCENTSGGYRCVCDAGYLLDKDNRTCR) constitute an EGF-like 2; calcium-binding domain. 3 N-linked (GlcNAc...) asparagine glycosylation sites follow: asparagine 365, asparagine 384, and asparagine 429. 4 LDL-receptor class B repeats span residues 441-485 (SHIY…DWLT), 486-528 (QNIY…WPQK), 529-572 (GLMF…DMHQ), and 573-615 (QRIY…FEDQ). 3 N-linked (GlcNAc...) asparagine glycosylation sites follow: asparagine 666, asparagine 749, and asparagine 782. LDL-receptor class B repeat units lie at residues 750–792 (GSLI…DHLS), 793–836 (RNLY…MPAE), 884–925 (QTIF…VHHD), and 934–940 (PRIYWTH). Asparagine 1022 carries an N-linked (GlcNAc...) asparagine glycan. LDL-receptor class A domains follow at residues 1024-1063 (TCVE…MNCD), 1073-1110 (LCSP…QHCE), 1117-1153 (KCHV…LLCE), 1157-1194 (RCEP…DKCV), and 1197-1233 (SCPP…LNCG). 15 disulfides stabilise this stretch: cysteine 1025-cysteine 1040, cysteine 1035-cysteine 1053, cysteine 1047-cysteine 1062, cysteine 1074-cysteine 1087, cysteine 1081-cysteine 1100, cysteine 1094-cysteine 1109, cysteine 1118-cysteine 1130, cysteine 1125-cysteine 1143, cysteine 1137-cysteine 1152, cysteine 1158-cysteine 1170, cysteine 1165-cysteine 1183, cysteine 1177-cysteine 1193, cysteine 1198-cysteine 1210, cysteine 1205-cysteine 1223, and cysteine 1217-cysteine 1232. A glycan (N-linked (GlcNAc...) asparagine) is linked at asparagine 1240. LDL-receptor class A domains lie at 1242–1280 (SCAE…ADCG) and 1282–1319 (VCSI…LSCE). Disulfide bonds link cysteine 1243/cysteine 1257, cysteine 1250/cysteine 1270, cysteine 1264/cysteine 1279, cysteine 1283/cysteine 1296, cysteine 1290/cysteine 1309, and cysteine 1303/cysteine 1318. N-linked (GlcNAc...) asparagine glycosylation is present at asparagine 1265. Asparagine 1326 carries N-linked (GlcNAc...) asparagine glycosylation. Positions 1339-1376 (SCRPHLFDCQDGECVDLSRVCNNFPDCTNGHDEGPKCA) constitute an LDL-receptor class A 13 domain. Intrachain disulfides connect cysteine 1340-cysteine 1352, cysteine 1347-cysteine 1365, cysteine 1359-cysteine 1375, cysteine 1422-cysteine 1432, and cysteine 1428-cysteine 1441. Positions 1418 to 1453 (DIDECQEQQPCAQLCENTLGGYQCQCHADFMLRQDR) constitute an EGF-like 3; calcium-binding domain. N-linked (GlcNAc...) asparagine glycosylation is found at asparagine 1475 and asparagine 1490. LDL-receptor class B repeat units follow at residues 1588 to 1637 (ARIF…DPHQ) and 1638 to 1687 (QLLY…YENN). Residues 1800 to 1820 (WLMALFVLAAGSLIAGLGYMY) form a helical membrane-spanning segment. Residues 1821-1984 (YQYRQRGHTD…GNDANARFVS (164 aa)) lie on the Cytoplasmic side of the membrane. Serine 1926 is modified (phosphoserine). Disordered regions lie at residues 1927 to 1951 (KLHA…RQVP) and 1965 to 1984 (SAGQ…RFVS). Residues 1932–1946 (DGGGAGGDGDGGRGV) are compositionally biased toward gly residues.

Belongs to the LDLR family. In terms of assembly, interacts with osk (isoform A). As to expression, ovary.

The protein resides in the cell membrane. It localises to the cytoplasm. The protein localises to the cell cortex. Its subcellular location is the cytoplasmic vesicle. It is found in the clathrin-coated vesicle membrane. The protein resides in the early endosome membrane. It localises to the endosome. The protein localises to the multivesicular body lumen. Cell surface receptor involved in uptake of vitellogenins (yolk proteins) into developing oocytes by receptor-mediated endocytosis. May also mediate uptake of apolpp/apolipophorins and their incorporation into yolk granules. Along with its ligands, required for maintenance of microtubule plus-end orientation towards the posterior pole of oocytes. Involved in polarized localization of germ plasm components, such as osk mRNA and vas protein, to the oocyte posterior cortex. Receptor-mediated endocytosis of vitellogenin receptor ligands is critical for osk (isoform A) mediated actin reorganization and the anchoring of germ plasm components to the oocyte cortex. In Drosophila melanogaster (Fruit fly), this protein is Vitellogenin receptor Yl.